A 224-amino-acid polypeptide reads, in one-letter code: MRELEQALRGGLADLALVLEDRQIALLLDYLALIQKWTQVYNLTAVREPAEMLTHHLLDSLAVIQPLRRQLAGLRDQTPDTDTANVRLLDVGSGAGLPGVVIAICCPEITVDCVDTVAKKVAFIRQVAATLKLANLHGLHARVESLTGPYRVICSRAFASLADFTRLSSAALAPQGLWLAMKAKDPAEEVAALPATVKVFHVEHLVVPGLGADRCIVWMRQSAV.

Residues G92, L97, 143-144 (VE), and R156 contribute to the S-adenosyl-L-methionine site.

This sequence belongs to the methyltransferase superfamily. RNA methyltransferase RsmG family.

Its subcellular location is the cytoplasm. It carries out the reaction guanosine(527) in 16S rRNA + S-adenosyl-L-methionine = N(7)-methylguanosine(527) in 16S rRNA + S-adenosyl-L-homocysteine. Its function is as follows. Specifically methylates the N7 position of guanine in position 527 of 16S rRNA. This Albidiferax ferrireducens (strain ATCC BAA-621 / DSM 15236 / T118) (Rhodoferax ferrireducens) protein is Ribosomal RNA small subunit methyltransferase G.